The sequence spans 672 residues: Flap endonuclease 1 (672 aa).

The N-domain stretch occupies residues 1–106 (MGIKGLTKFI…SELEKRGEKR (106 aa)). Residue aspartate 34 coordinates Mg(2+). 2 residues coordinate DNA: arginine 47 and arginine 72. Aspartate 88, glutamate 160, glutamate 162, aspartate 181, and aspartate 183 together coordinate Mg(2+). The I-domain stretch occupies residues 124–266 (EIKKQSGRTV…KTAYNLIKEY (143 aa)). Glutamate 160 serves as a coordination point for DNA. DNA is bound by residues glycine 244 and aspartate 246. Residue aspartate 246 participates in Mg(2+) binding. The interval 349–357 (TQRRLDNFF) is interaction with PCNA. Positions 371–610 (ETKKEQTLPA…EDSPNSYNNI (240 aa)) are disordered. 3 stretches are compositionally biased toward basic and acidic residues: residues 413–493 (MKEE…KKSL), 502–526 (DSDK…EKIN), and 535–548 (DHSR…KDNI). A compositionally biased stretch (low complexity) spans 549–584 (SDINNNNNNNNSSSNNNNISNNHFNSVSSNSTFNSS). The span at 587 to 603 (LKSEDTLKSNSPLKEDS) shows a compositional bias: basic and acidic residues.

It belongs to the XPG/RAD2 endonuclease family. FEN1 subfamily. As to quaternary structure, interacts with PCNA1 and PCNA2. Three molecules of FEN1 bind to one PCNA trimer with each molecule binding to one PCNA monomer. PCNA stimulates the nuclease activity without altering cleavage specificity. The cofactor is Mg(2+). In terms of processing, phosphorylated. Phosphorylation upon DNA damage induces relocalization to the nuclear plasma.

Its subcellular location is the nucleus. The protein resides in the nucleolus. It is found in the nucleoplasm. It localises to the mitochondrion. In terms of biological role, structure-specific nuclease with 5'-flap endonuclease and 5'-3' exonuclease activities involved in DNA replication and repair. During DNA replication, cleaves the 5'-overhanging flap structure that is generated by displacement synthesis when DNA polymerase encounters the 5'-end of a downstream Okazaki fragment. It enters the flap from the 5'-end and then tracks to cleave the flap base, leaving a nick for ligation. Also involved in the long patch base excision repair (LP-BER) pathway, by cleaving within the apurinic/apyrimidinic (AP) site-terminated flap. Acts as a genome stabilization factor that prevents flaps from equilibrating into structures that lead to duplications and deletions. Also possesses 5'-3' exonuclease activity on nicked or gapped double-stranded DNA, and exhibits RNase H activity. Also involved in replication and repair of rDNA and in repairing mitochondrial DNA. The sequence is that of Flap endonuclease 1 from Plasmodium falciparum (isolate 3D7).